Consider the following 314-residue polypeptide: Homoserine kinase (314 aa).

ATP is bound at residue 95-105 (PHSRGLGSSAA).

This sequence belongs to the GHMP kinase family. Homoserine kinase subfamily.

The protein resides in the cytoplasm. The catalysed reaction is L-homoserine + ATP = O-phospho-L-homoserine + ADP + H(+). Its pathway is amino-acid biosynthesis; L-threonine biosynthesis; L-threonine from L-aspartate: step 4/5. Its function is as follows. Catalyzes the ATP-dependent phosphorylation of L-homoserine to L-homoserine phosphate. The chain is Homoserine kinase from Mycolicibacterium vanbaalenii (strain DSM 7251 / JCM 13017 / BCRC 16820 / KCTC 9966 / NRRL B-24157 / PYR-1) (Mycobacterium vanbaalenii).